Here is a 253-residue protein sequence, read N- to C-terminus: 5-oxoprolinase subunit A (253 aa).

It belongs to the LamB/PxpA family. In terms of assembly, forms a complex composed of PxpA, PxpB and PxpC.

The catalysed reaction is 5-oxo-L-proline + ATP + 2 H2O = L-glutamate + ADP + phosphate + H(+). Catalyzes the cleavage of 5-oxoproline to form L-glutamate coupled to the hydrolysis of ATP to ADP and inorganic phosphate. This is 5-oxoprolinase subunit A from Bacillus anthracis (strain CDC 684 / NRRL 3495).